Reading from the N-terminus, the 335-residue chain is NmrA-like family domain-containing oxidoreductase hkm9 (335 aa).

Residues 12 to 17 (GATGNQ), 38 to 42 (RNPNS), 59 to 60 (DG), 80 to 82 (INS), Lys137, and 161 to 164 (YLEN) contribute to the NADP(+) site.

This sequence belongs to the NmrA-type oxidoreductase family.

It participates in secondary metabolite biosynthesis. Functionally, nmrA-like family domain-containing oxidoreductase; part of the gene cluster that mediates the biosynthesis of hancockiamides, an unusual new family of N-cinnamoylated piperazines. The NRPS hkm10 and the NmrA-like reductase hkm9 are proposed to convert two molecules of L-Phe to the intermediary piperazine called xenocockiamide A. Xenocockiamide A is then converted to hancockiamide D via a series of hydroxylations and O-methylations. The tyrosinase hkm6 may catalyze an aromatic hydroxylation, then the 2-oxoglutarate-dependent Fe(II) dioxygenase hkm4 and the FAD-dependent phenol hydroxylase hkm7 may catalyze consecutive hydroxylations to install 2 more hydroxy groups, and the methyltransferase hkm8 probably catalyzes two methylations using 2 molecules of S-adenosyl-L-methionine (SAM). The NRPS hkm11 activates and transfers trans-cinnamate supplied by the PAL hkm12 to hancockiamide D and produces hancockiamide A. NRPS Hkm11 has the flexibility to tolerate the bulky hancockiamide G as a substrate and the absence of the acetyl-transferase hkm3 opens up the opportunity for hkm11 to introduce a second N-cinnamoyl moiety. The cytochrome P450 monooxygenase hkm5 catalyzes the methylenedioxy bridge formation, converting hancockiamide A into hancockiamide G. Hkm5 can also convert hancockiamide B into hancockiamide C, and hancockiamide D into hancockiamide H. The N-acetyltransferase hkm3 finally transfers an acetyl group to 1-N of piperazine, converting hancockiamide A into hancockiamide B and hancockiamide G into hancockiamide C. This Aspergillus hancockii protein is NmrA-like family domain-containing oxidoreductase hkm9.